We begin with the raw amino-acid sequence, 474 residues long: Glutamate--tRNA ligase (474 aa).

A 'HIGH' region motif is present at residues 18 to 28; that stretch reads PSPTGFLHIGG. The short motif at 244-248 is the 'KMSKS' region element; the sequence is KLSKR. Lys247 serves as a coordination point for ATP.

The protein belongs to the class-I aminoacyl-tRNA synthetase family. Glutamate--tRNA ligase type 1 subfamily. Monomer.

It localises to the cytoplasm. It carries out the reaction tRNA(Glu) + L-glutamate + ATP = L-glutamyl-tRNA(Glu) + AMP + diphosphate. Catalyzes the attachment of glutamate to tRNA(Glu) in a two-step reaction: glutamate is first activated by ATP to form Glu-AMP and then transferred to the acceptor end of tRNA(Glu). The polypeptide is Glutamate--tRNA ligase (Caulobacter sp. (strain K31)).